We begin with the raw amino-acid sequence, 873 residues long: Zinc fingers and homeoboxes protein 1 (873 aa).

The interval 24–63 (LISDLDEGPPVLTPVENTRAESISSDEEVHESVDSDNQQN) is disordered. Residue T36 is modified to Phosphothreonine. A phosphoserine mark is found at S45, S47, and S48. 2 C2H2-type zinc fingers span residues 70 to 93 (YECK…DSEH) and 102 to 125 (YVCV…LKYH). A Glycyl lysine isopeptide (Lys-Gly) (interchain with G-Cter in SUMO2) cross-link involves residue K159. Positions 198–236 (VHHNSVEDVPEEKENEIKPDREETVENPSSSASESNTST) are disordered. Residue S202 is modified to Phosphoserine. A compositionally biased stretch (basic and acidic residues) spans 212 to 221 (NEIKPDREET). Positions 223–236 (ENPSSSASESNTST) are enriched in low complexity. Residues 272–432 (NSNLIPKVLI…QNNVQKSQVP (161 aa)) form a required for dimerization region. The interval 272 to 564 (NSNLIPKVLI…VQPKQSWNPF (293 aa)) is required for interaction with NFYA. Residues 284 to 346 (NSIPTYNAAL…LKHGVSWTPE (63 aa)) constitute a DNA-binding region (homeobox 1). Residues 431–454 (VPAAQPTAETKPATAAVPTSQSVK) are disordered. Glycyl lysine isopeptide (Lys-Gly) (interchain with G-Cter in SUMO2) cross-links involve residues K441, K454, and K485. The homeobox 2 DNA-binding region spans 464–526 (SFGIRAKKTK…YNQRNSKSNQ (63 aa)). 3 disordered regions span residues 544 to 563 (DETT…SWNP), 626 to 668 (KEEK…CKKT), and 732 to 769 (SSMN…INNW). Polar residues predominate over residues 550–562 (PTVGTVQPKQSWN). A DNA-binding region (homeobox 3) is located at residues 569–630 (PQKFKEKTAE…KSKALKEEKM (62 aa)). A Glycyl lysine isopeptide (Lys-Gly) (interchain with G-Cter in SUMO2) cross-link involves residue K629. S648 is modified (phosphoserine). A DNA-binding region (homeobox 4) is located at residues 660–722 (STGKICKKTP…YAWKNGNLKW (63 aa)). Positions 734–768 (MNGLSSLRKRGRGRPKGRGRGRPRGRPRGSKRINN) are required for nuclear localization. Basic residues predominate over residues 740 to 764 (LRKRGRGRPKGRGRGRPRGRPRGSK). S774 is subject to Phosphoserine. The segment at residues 777–832 (KFKTGTAILKDYYLKHKFLNEQDLDELVNKSHMGYEQVREWFAERQRRSELGIELF) is a DNA-binding region (homeobox 5). The segment at 829–873 (IELFEENEEEDEVIDDQEEDEEETDDSDTWEPPRHVKRKLSKSDD) is disordered. The span at 831–857 (LFEENEEEDEVIDDQEEDEEETDDSDT) shows a compositional bias: acidic residues. The segment at 831 to 873 (LFEENEEEDEVIDDQEEDEEETDDSDTWEPPRHVKRKLSKSDD) is required for repressor activity. A compositionally biased stretch (basic residues) spans 863 to 873 (HVKRKLSKSDD).

Belongs to the ZHX family. As to quaternary structure, forms homodimers. Heterodimer (via HD1 domain) with ZHX2 (via HD1 domain). Also forms a heterodimer with ZHX3 which is a prerequisite for repressor activity. Interacts with ATF7IP and NFYA. Interacts (via homeobox domains) with DNMT3B (via PWWP domain).

It is found in the nucleus. Functionally, acts as a transcriptional repressor. Increases DNMT3B-mediated repressive transcriptional activity when DNMT3B is tethered to DNA. May link molecule between DNMT3B and other co-repressor proteins. The chain is Zinc fingers and homeoboxes protein 1 (ZHX1) from Pongo pygmaeus (Bornean orangutan).